Here is a 317-residue protein sequence, read N- to C-terminus: tRNA dimethylallyltransferase (317 aa).

Residue Gly14 to Thr21 coordinates ATP. Thr16–Thr21 is a substrate binding site. Interaction with substrate tRNA stretches follow at residues Asp39–Leu42, Gln163–Arg167, and Arg248–Arg253.

It belongs to the IPP transferase family. As to quaternary structure, monomer. It depends on Mg(2+) as a cofactor.

The enzyme catalyses adenosine(37) in tRNA + dimethylallyl diphosphate = N(6)-dimethylallyladenosine(37) in tRNA + diphosphate. Catalyzes the transfer of a dimethylallyl group onto the adenine at position 37 in tRNAs that read codons beginning with uridine, leading to the formation of N6-(dimethylallyl)adenosine (i(6)A). This chain is tRNA dimethylallyltransferase, found in Paraburkholderia phymatum (strain DSM 17167 / CIP 108236 / LMG 21445 / STM815) (Burkholderia phymatum).